A 368-amino-acid chain; its full sequence is Histidinol-phosphate aminotransferase (368 aa).

Residue Lys-223 is modified to N6-(pyridoxal phosphate)lysine.

This sequence belongs to the class-II pyridoxal-phosphate-dependent aminotransferase family. Histidinol-phosphate aminotransferase subfamily. As to quaternary structure, homodimer. Pyridoxal 5'-phosphate is required as a cofactor.

It carries out the reaction L-histidinol phosphate + 2-oxoglutarate = 3-(imidazol-4-yl)-2-oxopropyl phosphate + L-glutamate. Its pathway is amino-acid biosynthesis; L-histidine biosynthesis; L-histidine from 5-phospho-alpha-D-ribose 1-diphosphate: step 7/9. This is Histidinol-phosphate aminotransferase from Rhodospirillum rubrum (strain ATCC 11170 / ATH 1.1.1 / DSM 467 / LMG 4362 / NCIMB 8255 / S1).